The following is a 1735-amino-acid chain: Glutamine and serine-rich protein 1 (1735 aa).

N-acetylmethionine is present on Met-1. The span at 267 to 297 (AIPSSGYPPSTTKIKSCSTEQPLTSTKTPKP) shows a compositional bias: polar residues. Disordered stretches follow at residues 267–301 (AIPS…QSII), 414–440 (TRDL…VSQT), 479–518 (SRAQ…FLPA), and 533–561 (LQNN…SKQE). Low complexity predominate over residues 417 to 440 (LSSVSQSQSYSSGHSQGLSPVSQT). 3 positions are modified to phosphoserine: Ser-586, Ser-615, and Ser-886. Thr-949 is subject to Phosphothreonine. Residues 964–1033 (GPSHEVQEQS…EFTLGGDDSG (70 aa)) form a disordered region. Residues 971-985 (EQSSGPFKKQSATNL) are compositionally biased toward polar residues. Ser-987 carries the phosphoserine modification. Positions 997-1024 (STLNNNRNQEFVSSSRSISGENATSESE) are enriched in polar residues. Glycyl lysine isopeptide (Lys-Gly) (interchain with G-Cter in SUMO2) cross-links involve residues Lys-1058 and Lys-1083. 2 disordered regions span residues 1073–1132 (KKRA…EKMR) and 1178–1217 (RPGT…DKVD). Residues 1120–1132 (SCHDGYQHQEKMR) are compositionally biased toward basic and acidic residues. Ser-1211, Ser-1230, Ser-1231, and Ser-1239 each carry phosphoserine. The tract at residues 1256–1286 (TSDKKKKTEALQVATTSPTANTTGTATTSST) is disordered. A compositionally biased stretch (low complexity) spans 1269–1286 (ATTSPTANTTGTATTSST). Thr-1341 carries the phosphothreonine modification. Ser-1348 carries the phosphoserine modification. A disordered region spans residues 1441-1532 (VCSKKPRNKP…SSDDEEFEPP (92 aa)). The span at 1449-1478 (KPSQTIRTVQAKPSSSSKTSDPLASKTTTT) shows a compositional bias: polar residues. The span at 1492-1508 (VKAEPPPKKRKKWKEEF) shows a compositional bias: basic and acidic residues.

As to quaternary structure, interacts with TET1.

The protein resides in the chromosome. In terms of biological role, plays an essential role in the protection and maintenance of transcriptional and developmental programs. Protects many bivalent promoters and poised enhancers from hypermethylation, showing a marked preference for these regulatory elements over other types of promoters or enhancers. Mechanistically, cooperates with TET1 and binds to DNA in a common complex to inhibit the binding of DNMT3A/3B and therefore de novo methylation. The sequence is that of Glutamine and serine-rich protein 1 (QSER1) from Homo sapiens (Human).